Reading from the N-terminus, the 997-residue chain is Glutamate [NMDA] receptor subunit 1 (997 aa).

The signal sequence occupies residues 1-26 (MAVAGFVFCRPLFGLAIVLLVAPIDA). The Extracellular portion of the chain corresponds to 27-573 (AQRHTASDNP…TLVSFLQPFS (547 aa)). 7 N-linked (GlcNAc...) asparagine glycosylation sites follow: Asn-258, Asn-314, Asn-345, Asn-397, Asn-454, Asn-481, and Asn-501. Glycine-binding positions include 530-532 (PLT) and Arg-537. Residues 574 to 594 (NTLWILVMVSVHVVALVLYLL) form a helical membrane-spanning segment. Topologically, residues 595 to 651 (DRFSPFGRFKLSHSDSNEEKALNLSSAVWFAWGVLLNSGIGEGTPRSFSARVLGMVW) are cytoplasmic. A helical transmembrane segment spans residues 652-672 (AGFAMIIVASYTANLAAFLVL). The Extracellular portion of the chain corresponds to 673 to 831 (ERPKTKLSGI…KTPNTLGLKN (159 aa)). Asn-693 carries N-linked (GlcNAc...) asparagine glycosylation. Glycine-binding residues include Ser-703 and Asp-747. Residues 832–852 (MAGVFILVGVGIAGGVGLIII) traverse the membrane as a helical segment. Residues 853–997 (EVIYKKHQVK…YTSDVSHLVV (145 aa)) are Cytoplasmic-facing. Residues 970 to 997 (LGKTRPQQSVLPPRYSPGYTSDVSHLVV) form a disordered region. Residues 987-997 (GYTSDVSHLVV) show a composition bias toward polar residues.

This sequence belongs to the glutamate-gated ion channel (TC 1.A.10.1) family. In terms of assembly, forms a heteromeric NMDA channel with Nmdar2.

Its subcellular location is the cell membrane. It is found in the postsynaptic cell membrane. It localises to the postsynaptic density. Functionally, NMDA receptor subtype of glutamate-gated ion channels with high calcium permeability and voltage-dependent sensitivity to magnesium. Mediated by glycine. This protein plays a key role in synaptic plasticity, synaptogenesis, excitotoxicity, memory acquisition and learning. It mediates neuronal functions in glutamate neurotransmission. Is involved in the cell surface targeting of NMDA receptors. Plays a role in associative learning and in long-term memory consolidation. The sequence is that of Glutamate [NMDA] receptor subunit 1 from Drosophila sechellia (Fruit fly).